A 431-amino-acid polypeptide reads, in one-letter code: Histidinol dehydrogenase (431 aa).

Y124, Q187, and N210 together coordinate NAD(+). Substrate-binding residues include S236, Q258, and H261. Zn(2+)-binding residues include Q258 and H261. Active-site proton acceptor residues include E325 and H326. Substrate contacts are provided by H326, D359, E413, and H418. D359 provides a ligand contact to Zn(2+). H418 provides a ligand contact to Zn(2+).

Belongs to the histidinol dehydrogenase family. Zn(2+) is required as a cofactor.

The catalysed reaction is L-histidinol + 2 NAD(+) + H2O = L-histidine + 2 NADH + 3 H(+). It functions in the pathway amino-acid biosynthesis; L-histidine biosynthesis; L-histidine from 5-phospho-alpha-D-ribose 1-diphosphate: step 9/9. Its function is as follows. Catalyzes the sequential NAD-dependent oxidations of L-histidinol to L-histidinaldehyde and then to L-histidine. This is Histidinol dehydrogenase from Legionella pneumophila (strain Paris).